The chain runs to 262 residues: Dihydroorotate dehydrogenase B (NAD(+)), electron transfer subunit (262 aa).

The FAD-binding FR-type domain maps to 3-104; the sequence is KLQEMMTIVS…MGPLGNGFPV (102 aa). FAD is bound by residues 53–56, 70–72, and 79–80; these read RPIS, LYR, and GT. [2Fe-2S] cluster is bound by residues Cys226, Cys231, Cys234, and Cys249.

The protein belongs to the PyrK family. As to quaternary structure, heterotetramer of 2 PyrK and 2 PyrD type B subunits. The cofactor is [2Fe-2S] cluster. Requires FAD as cofactor.

It participates in pyrimidine metabolism; UMP biosynthesis via de novo pathway; orotate from (S)-dihydroorotate (NAD(+) route): step 1/1. Its function is as follows. Responsible for channeling the electrons from the oxidation of dihydroorotate from the FMN redox center in the PyrD type B subunit to the ultimate electron acceptor NAD(+). The protein is Dihydroorotate dehydrogenase B (NAD(+)), electron transfer subunit of Lactococcus lactis subsp. lactis (strain IL1403) (Streptococcus lactis).